Reading from the N-terminus, the 421-residue chain is Acyl-coenzyme A thioesterase 5 (421 aa).

Residues Ser-232, Asp-326, and His-360 each act as charge relay system in the active site. Residues 419–421 carry the Microbody targeting signal motif; sequence AKL.

This sequence belongs to the C/M/P thioester hydrolase family. Highly expressed in spleen, brain, testis and proximal and distal intestine; expressed at low level in the liver.

The protein localises to the peroxisome. It carries out the reaction hexadecanoyl-CoA + H2O = hexadecanoate + CoA + H(+). It catalyses the reaction decanoyl-CoA + H2O = decanoate + CoA + H(+). The enzyme catalyses octanoyl-CoA + H2O = octanoate + CoA + H(+). The catalysed reaction is dodecanoyl-CoA + H2O = dodecanoate + CoA + H(+). It carries out the reaction tetradecanoyl-CoA + H2O = tetradecanoate + CoA + H(+). It catalyses the reaction octadecanoyl-CoA + H2O = octadecanoate + CoA + H(+). The enzyme catalyses eicosanoyl-CoA + H2O = eicosanoate + CoA + H(+). The catalysed reaction is (9Z)-octadecenoyl-CoA + H2O = (9Z)-octadecenoate + CoA + H(+). It carries out the reaction (9Z,12Z)-octadecadienoyl-CoA + H2O = (9Z,12Z)-octadecadienoate + CoA + H(+). It catalyses the reaction (5Z,8Z,11Z,14Z)-eicosatetraenoyl-CoA + H2O = (5Z,8Z,11Z,14Z)-eicosatetraenoate + CoA + H(+). The enzyme catalyses (9Z)-hexadecenoyl-CoA + H2O = (9Z)-hexadecenoate + CoA + H(+). Its pathway is lipid metabolism; fatty acid metabolism. Its function is as follows. Catalyzes the hydrolysis of acyl-CoAs into free fatty acids and coenzyme A (CoASH), regulating their respective intracellular levels. Mainly active on medium-chain acyl-CoAs. Seems to be involved in intraperoxisomal regulation of acyl-CoA levels, but not CoASH levels. May have a function in termination of beta-oxidation of fatty acids. This chain is Acyl-coenzyme A thioesterase 5 (Acot5), found in Mus musculus (Mouse).